The sequence spans 113 residues: Large ribosomal subunit protein bL17 (113 aa).

Belongs to the bacterial ribosomal protein bL17 family. As to quaternary structure, part of the 50S ribosomal subunit. Contacts protein L32.

In Clostridium kluyveri (strain NBRC 12016), this protein is Large ribosomal subunit protein bL17.